Reading from the N-terminus, the 243-residue chain is Ubiquinone/menaquinone biosynthesis C-methyltransferase UbiE (243 aa).

Residues Thr-69, Asp-90, and 116–117 each bind S-adenosyl-L-methionine; that span reads DA.

This sequence belongs to the class I-like SAM-binding methyltransferase superfamily. MenG/UbiE family.

It carries out the reaction a 2-demethylmenaquinol + S-adenosyl-L-methionine = a menaquinol + S-adenosyl-L-homocysteine + H(+). The enzyme catalyses a 2-methoxy-6-(all-trans-polyprenyl)benzene-1,4-diol + S-adenosyl-L-methionine = a 5-methoxy-2-methyl-3-(all-trans-polyprenyl)benzene-1,4-diol + S-adenosyl-L-homocysteine + H(+). The protein operates within quinol/quinone metabolism; menaquinone biosynthesis; menaquinol from 1,4-dihydroxy-2-naphthoate: step 2/2. It functions in the pathway cofactor biosynthesis; ubiquinone biosynthesis. Functionally, methyltransferase required for the conversion of demethylmenaquinol (DMKH2) to menaquinol (MKH2) and the conversion of 2-polyprenyl-6-methoxy-1,4-benzoquinol (DDMQH2) to 2-polyprenyl-3-methyl-6-methoxy-1,4-benzoquinol (DMQH2). This Burkholderia cenocepacia (strain HI2424) protein is Ubiquinone/menaquinone biosynthesis C-methyltransferase UbiE.